We begin with the raw amino-acid sequence, 316 residues long: Malate dehydrogenase (316 aa).

NAD(+) contacts are provided by residues 12–17 (GAGNIG) and aspartate 36. Residues arginine 85 and arginine 91 each coordinate substrate. Residues asparagine 98 and 121–123 (VTN) contribute to the NAD(+) site. Residues asparagine 123 and arginine 154 each contribute to the substrate site. The Proton acceptor role is filled by histidine 178.

This sequence belongs to the LDH/MDH superfamily. MDH type 3 family.

The enzyme catalyses (S)-malate + NAD(+) = oxaloacetate + NADH + H(+). Functionally, catalyzes the reversible oxidation of malate to oxaloacetate. The chain is Malate dehydrogenase from Wolbachia pipientis wMel.